Here is a 134-residue protein sequence, read N- to C-terminus: Large ribosomal subunit protein bL17 (134 aa).

The protein belongs to the bacterial ribosomal protein bL17 family. Part of the 50S ribosomal subunit. Contacts protein L32.

The sequence is that of Large ribosomal subunit protein bL17 from Paracidovorax citrulli (strain AAC00-1) (Acidovorax citrulli).